Consider the following 216-residue polypeptide: Guanylate kinase (216 aa).

The Guanylate kinase-like domain occupies 15 to 193 (GNLFMVVAPS…ALEELRNVVR (179 aa)). ATP is bound at residue 22-29 (APSGAGKS).

The protein belongs to the guanylate kinase family.

Its subcellular location is the cytoplasm. It catalyses the reaction GMP + ATP = GDP + ADP. In terms of biological role, essential for recycling GMP and indirectly, cGMP. The sequence is that of Guanylate kinase from Cupriavidus pinatubonensis (strain JMP 134 / LMG 1197) (Cupriavidus necator (strain JMP 134)).